We begin with the raw amino-acid sequence, 537 residues long: Putative cysteine ligase BshC (537 aa).

A coiled-coil region spans residues 417-457 (ASEQFLNELDQLEAQQKETYERLAAEVQGNEDNKNLVEKNN).

The protein belongs to the BshC family.

In terms of biological role, involved in bacillithiol (BSH) biosynthesis. May catalyze the last step of the pathway, the addition of cysteine to glucosamine malate (GlcN-Mal) to generate BSH. The polypeptide is Putative cysteine ligase BshC (Staphylococcus carnosus (strain TM300)).